Consider the following 206-residue polypeptide: Venom allergen 5 2 (206 aa).

4 cysteine pairs are disulfide-bonded: Cys4-Cys16, Cys8-Cys104, Cys28-Cys96, and Cys172-Cys189. The SCP domain occupies 48–191 (DEHNRFRQKV…MKSHYLVCNY (144 aa)).

The protein belongs to the CRISP family. Venom allergen 5-like subfamily. Expressed by the venom gland.

The protein localises to the secreted. In Polybia paulista (Neotropical social wasp), this protein is Venom allergen 5 2.